The primary structure comprises 217 residues: MVFPKLIWMGFFCHLCRGYFDGPLYPEMSNGTLHHYFVPDGDYEENDDPEKCQLLFRVSDRRRCSQGEGGQASSLLSLTLREEFTVLGRQVEDAGRVLEGISKSISYDLDGEESYGKYLRRESHQIGDAYSNSDKSLTELESKFKQGQEQDSRQESRLNEDFLGMLVHTRSLLKETLDISVGLRDKYELLAHTIRSHGTRLGRLKSDYLEGGAQKTG.

The signal sequence occupies residues 1-18 (MVFPKLIWMGFFCHLCRG). The N-linked (GlcNAc...) asparagine glycan is linked to Asn30.

Belongs to the FIBIN family. As to quaternary structure, homodimer; disulfide-linked. Seems to also exist as monomers.

The protein localises to the secreted. It is found in the golgi apparatus. It localises to the endoplasmic reticulum. The polypeptide is Fin bud initiation factor homolog (Fibin) (Mus musculus (Mouse)).